The chain runs to 693 residues: Elongation factor G (693 aa).

The 275-residue stretch at 8–282 (KNTRNIGIMA…AVIDYLPSPL (275 aa)) folds into the tr-type G domain. GTP-binding positions include 17–24 (AHIDAGKT), 81–85 (DTPGH), and 135–138 (NKMD).

This sequence belongs to the TRAFAC class translation factor GTPase superfamily. Classic translation factor GTPase family. EF-G/EF-2 subfamily.

Its subcellular location is the cytoplasm. Functionally, catalyzes the GTP-dependent ribosomal translocation step during translation elongation. During this step, the ribosome changes from the pre-translocational (PRE) to the post-translocational (POST) state as the newly formed A-site-bound peptidyl-tRNA and P-site-bound deacylated tRNA move to the P and E sites, respectively. Catalyzes the coordinated movement of the two tRNA molecules, the mRNA and conformational changes in the ribosome. In Staphylococcus epidermidis (strain ATCC 35984 / DSM 28319 / BCRC 17069 / CCUG 31568 / BM 3577 / RP62A), this protein is Elongation factor G.